The chain runs to 679 residues: Protein asunder (679 aa).

A coiled-coil region spans residues Arg519 to Gln541. The tract at residues Gly564 to Arg610 is disordered. A Nuclear localization signal (NLS) motif is present at residues Leu604 to Arg610.

Belongs to the Integrator subunit 13 family. As to quaternary structure, belongs to the multiprotein complex Integrator, at least composed of IntS1, IntS2, IntS3, IntS4, omd/IntS5, IntS6, defl/IntS7, IntS8, IntS9, IntS10, IntS11, IntS12, asun/IntS13, IntS14 and IntS15. The core complex associates with protein phosphatase 2A subunits mts/PP2A and Pp2A-29B, to form the Integrator-PP2A (INTAC) complex. In terms of processing, phosphorylated.

The protein resides in the nucleus. The protein localises to the cytoplasm. It is found in the perinuclear region. Functionally, component of the integrator complex, a multiprotein complex that terminates RNA polymerase II (Pol II) transcription in the promoter-proximal region of genes. The integrator complex provides a quality checkpoint during transcription elongation by driving premature transcription termination of transcripts that are unfavorably configured for transcriptional elongation: the complex terminates transcription by (1) catalyzing dephosphorylation of the C-terminal domain (CTD) of Pol II subunit Polr2A/Rbp1 and Spt5, and (2) degrading the exiting nascent RNA transcript via endonuclease activity. The integrator complex is also involved in the 3'-end processing of the U7 snRNA, and also the spliceosomal snRNAs U1, U2, U4 and U5. The sequence is that of Protein asunder (asun) from Drosophila mojavensis (Fruit fly).